The chain runs to 108 residues: Thiosulfate sulfurtransferase GlpE (108 aa).

A Rhodanese domain is found at 17–105 (QEKEAVLVDI…WQRQFPAEVA (89 aa)). The active-site Cysteine persulfide intermediate is C65.

Belongs to the GlpE family.

It is found in the cytoplasm. The enzyme catalyses thiosulfate + hydrogen cyanide = thiocyanate + sulfite + 2 H(+). It catalyses the reaction thiosulfate + [thioredoxin]-dithiol = [thioredoxin]-disulfide + hydrogen sulfide + sulfite + 2 H(+). In terms of biological role, transferase that catalyzes the transfer of sulfur from thiosulfate to thiophilic acceptors such as cyanide or dithiols. May function in a CysM-independent thiosulfate assimilation pathway by catalyzing the conversion of thiosulfate to sulfite, which can then be used for L-cysteine biosynthesis. The chain is Thiosulfate sulfurtransferase GlpE from Escherichia coli O45:K1 (strain S88 / ExPEC).